Consider the following 268-residue polypeptide: Tryptophan synthase alpha chain (268 aa).

Catalysis depends on proton acceptor residues glutamate 49 and aspartate 60.

Belongs to the TrpA family. Tetramer of two alpha and two beta chains.

It catalyses the reaction (1S,2R)-1-C-(indol-3-yl)glycerol 3-phosphate + L-serine = D-glyceraldehyde 3-phosphate + L-tryptophan + H2O. The protein operates within amino-acid biosynthesis; L-tryptophan biosynthesis; L-tryptophan from chorismate: step 5/5. Its function is as follows. The alpha subunit is responsible for the aldol cleavage of indoleglycerol phosphate to indole and glyceraldehyde 3-phosphate. This chain is Tryptophan synthase alpha chain, found in Mannheimia succiniciproducens (strain KCTC 0769BP / MBEL55E).